A 186-amino-acid polypeptide reads, in one-letter code: Tumor necrosis factor alpha-induced protein 8-like protein 1 (186 aa).

Belongs to the TNFAIP8 family.

The protein localises to the cytoplasm. The protein is Tumor necrosis factor alpha-induced protein 8-like protein 1 (TNFAIP8L1) of Gallus gallus (Chicken).